The following is a 62-amino-acid chain: Large ribosomal subunit protein uL29 (62 aa).

It belongs to the universal ribosomal protein uL29 family.

This chain is Large ribosomal subunit protein uL29, found in Geobacter sp. (strain M21).